We begin with the raw amino-acid sequence, 916 residues long: Protein O-GlcNAcase (916 aa).

Residues 1 to 50 (MVQKESQAALEERESERNANPASVSGASLEPSAAPAPGEDNPSGAGAAAG) form a disordered region. A GH84 domain is found at 60 to 336 (FLCGVVEGFY…TLATWYKSNM (277 aa)). A protein contacts are provided by G67, K98, and D174. The active-site Proton donor is D175. A protein contacts are provided by residues Y219, 278–280 (WDN), D285, and N313. S364 carries the post-translational modification Phosphoserine. The interval 440–480 (QGAALSGEPSALTKEEEKKQPDEEPMDMVVEKQEESEHKSD) is disordered. Composition is skewed to basic and acidic residues over residues 452 to 461 (TKEEEKKQPD) and 468 to 480 (VVEK…HKSD).

It belongs to the glycosyl hydrolase 84 family. As to quaternary structure, monomer. Interacts with CLOCK. In terms of processing, proteolytically cleaved by caspase-3 during apoptosis. The fragments interact with each other; cleavage does not decrease enzyme activity. As to expression, detected in spleen (at protein level). Ubiquitous. Expressed at highest levels in the brain and spleen.

The protein resides in the nucleus. The protein localises to the cytoplasm. It carries out the reaction 3-O-(N-acetyl-beta-D-glucosaminyl)-L-seryl-[protein] + H2O = N-acetyl-D-glucosamine + L-seryl-[protein]. It catalyses the reaction 3-O-(N-acetyl-beta-D-glucosaminyl)-L-threonyl-[protein] + H2O = L-threonyl-[protein] + N-acetyl-D-glucosamine. Inhibited by Cu(2+), Hg(2+), Cd(2+) and Zn(2+) at 1 mM. Not inhibited by Co(2+), Mg(2+), Ca(2+), Mn(2+), Fe(3+) and EDTA. Also inhibited by sodium chloride at 1M and 2-amino-2-hydroxymethyl-1,3-propanediol (trishydroxymethylaminomethane) at 75 mM. Cleaves GlcNAc but not GalNAc from O-glycosylated proteins. Deglycosylates a large and diverse number of proteins, such as CRYAB, ELK1, GSDMD, LMNB1 and TAB1. Can use p-nitrophenyl-beta-GlcNAc and 4-methylumbelliferone-GlcNAc as substrates but not p-nitrophenyl-beta-GalNAc or p-nitrophenyl-alpha-GlcNAc (in vitro). Does not bind acetyl-CoA and does not have histone acetyltransferase activity. Functionally, lacks enzyme activity. This is Protein O-GlcNAcase from Rattus norvegicus (Rat).